Here is a 244-residue protein sequence, read N- to C-terminus: Phosphoadenosine 5'-phosphosulfate reductase (244 aa).

The Nucleophile; cysteine thiosulfonate intermediate role is filled by Cys-239.

This sequence belongs to the PAPS reductase family. CysH subfamily.

Its subcellular location is the cytoplasm. The catalysed reaction is [thioredoxin]-disulfide + sulfite + adenosine 3',5'-bisphosphate + 2 H(+) = [thioredoxin]-dithiol + 3'-phosphoadenylyl sulfate. It functions in the pathway sulfur metabolism; hydrogen sulfide biosynthesis; sulfite from sulfate: step 3/3. Its function is as follows. Catalyzes the formation of sulfite from phosphoadenosine 5'-phosphosulfate (PAPS) using thioredoxin as an electron donor. This chain is Phosphoadenosine 5'-phosphosulfate reductase, found in Citrobacter koseri (strain ATCC BAA-895 / CDC 4225-83 / SGSC4696).